The primary structure comprises 236 residues: MYNADVLAFGAHSDDVEIGMGGTIAKFVKQEKKVMICDLTEAELSSNGTVSLRKEEAAEAARILGADKRIQLTLPDRGLIMSDQAIRSIVTVIRICRPKAVFMPYKKDRHPDHGNAAALVEEAIFSAGIHKYKDEKSLPAHKVSKVYYYMINGFHQPDFVIDISDTIEAKKQSLNAYKSQFIPSKDSVSTPLTNGYIEIVEAREKLYGKEAGVEYAEGFFSKRMLMLDHDVLGGEQ.

Zn(2+) is bound by residues His12, Asp15, and His113.

It belongs to the PIGL family. Zn(2+) is required as a cofactor.

It catalyses the reaction (S)-malyl N-acetyl-alpha-D-glucosaminide + H2O = (S)-malyl alpha-D-glucosaminide + acetate. In terms of biological role, involved in bacillithiol (BSH) biosynthesis. Catalyzes the second step of the pathway, the deacetylation of N-acetylglucosaminylmalate (GlcNAc-Mal) to glucosamine malate (GlcN-Mal). This is N-acetyl-alpha-D-glucosaminyl L-malate deacetylase 1 from Bacillus subtilis (strain 168).